Reading from the N-terminus, the 469-residue chain is Glutamine synthetase (469 aa).

One can recognise a GS beta-grasp domain in the interval Glu-16–Thr-100. The region spanning Thr-108 to Ile-469 is the GS catalytic domain. Residues Glu-133 and Glu-135 each coordinate Mg(2+). Glu-207 provides a ligand contact to ATP. The Mg(2+) site is built by Glu-212 and Glu-220. L-glutamate is bound by residues Asn-264–Gly-265 and Gly-265. Mg(2+) is bound at residue His-269. ATP contacts are provided by residues His-271–Ser-273 and Ser-273. Residues Arg-321, Glu-327, and Arg-339 each contribute to the L-glutamate site. ATP-binding residues include Arg-339, Arg-344, and Lys-353. Mg(2+) is bound at residue Glu-358. Arg-360 contacts L-glutamate. An O-AMP-tyrosine modification is found at Tyr-398.

The protein belongs to the glutamine synthetase family. Oligomer of 12 subunits arranged in the form of two hexagons. The cofactor is Mg(2+).

The protein localises to the cytoplasm. It catalyses the reaction L-glutamate + NH4(+) + ATP = L-glutamine + ADP + phosphate + H(+). The activity of this enzyme could be controlled by adenylation under conditions of abundant glutamine. Functionally, catalyzes the ATP-dependent biosynthesis of glutamine from glutamate and ammonia. This is Glutamine synthetase from Aquifex aeolicus (strain VF5).